The primary structure comprises 263 residues: Putative replication protein PDa0002 (263 aa).

The sequence is that of Putative replication protein PDa0002 from Xylella fastidiosa (strain Temecula1 / ATCC 700964).